The primary structure comprises 383 residues: Fructose-1,6-bisphosphate aldolase/phosphatase (383 aa).

Asp11 serves as the catalytic Proton acceptor; for FBP phosphatase activity. Mg(2+) contacts are provided by Asp11, His18, Asp52, and Asp53. A beta-D-fructose 1,6-bisphosphate-binding site is contributed by His18. His18 is a binding site for dihydroxyacetone phosphate. Tyr90 is a beta-D-fructose 1,6-bisphosphate binding site. Position 94 (Gln94) interacts with Mg(2+). 103–104 is a binding site for beta-D-fructose 1,6-bisphosphate; sequence GN. A Mg(2+)-binding site is contributed by Asp131. Lys132 lines the beta-D-fructose 1,6-bisphosphate pocket. Dihydroxyacetone phosphate is bound at residue Lys132. Tyr228 serves as the catalytic Proton donor/acceptor; for FBP aldolase activity. Residues Lys231, Asp232, and Asp233 each coordinate Mg(2+). Lys231 functions as the Schiff-base intermediate with DHAP; for FBP aldolase activity in the catalytic mechanism. Residues 241–242, Arg265, Asp286, and Tyr347 each bind beta-D-fructose 1,6-bisphosphate; that span reads QH. Dihydroxyacetone phosphate is bound by residues Arg265 and Asp286. The segment at 361–383 is disordered; sequence FKKEEDVKKAKPSVYTSKDQGMD. A compositionally biased stretch (polar residues) spans 374 to 383; sequence VYTSKDQGMD.

The protein belongs to the FBP aldolase/phosphatase family. Homooctamer; dimer of tetramers. Requires Mg(2+) as cofactor.

It carries out the reaction beta-D-fructose 1,6-bisphosphate + H2O = beta-D-fructose 6-phosphate + phosphate. The enzyme catalyses beta-D-fructose 1,6-bisphosphate = D-glyceraldehyde 3-phosphate + dihydroxyacetone phosphate. It participates in carbohydrate biosynthesis; gluconeogenesis. Functionally, catalyzes two subsequent steps in gluconeogenesis: the aldol condensation of dihydroxyacetone phosphate (DHAP) and glyceraldehyde-3-phosphate (GA3P) to fructose-1,6-bisphosphate (FBP), and the dephosphorylation of FBP to fructose-6-phosphate (F6P). This Metallosphaera sedula (strain ATCC 51363 / DSM 5348 / JCM 9185 / NBRC 15509 / TH2) protein is Fructose-1,6-bisphosphate aldolase/phosphatase.